The chain runs to 423 residues: 3-isopropylmalate dehydratase large subunit 1 (423 aa).

Cysteine 302, cysteine 362, and cysteine 365 together coordinate [4Fe-4S] cluster.

This sequence belongs to the aconitase/IPM isomerase family. LeuC type 2 subfamily. Heterodimer of LeuC and LeuD. It depends on [4Fe-4S] cluster as a cofactor.

It carries out the reaction (2R,3S)-3-isopropylmalate = (2S)-2-isopropylmalate. It functions in the pathway amino-acid biosynthesis; L-leucine biosynthesis; L-leucine from 3-methyl-2-oxobutanoate: step 2/4. Functionally, catalyzes the isomerization between 2-isopropylmalate and 3-isopropylmalate, via the formation of 2-isopropylmaleate. The protein is 3-isopropylmalate dehydratase large subunit 1 of Pyrococcus abyssi (strain GE5 / Orsay).